A 1450-amino-acid chain; its full sequence is DNA-directed RNA polymerase RPB1 homolog (1450 aa).

Belongs to the RNA polymerase beta' chain family. In terms of assembly, part of the viral DNA-directed RNA polymerase that consists of 8 polII-like subunits (RPB1, RPB2, RPB3, RPB5, RPB6, RPB7, RPB9, RPB10), a capping enzyme and a termination factor.

It localises to the virion. It catalyses the reaction RNA(n) + a ribonucleoside 5'-triphosphate = RNA(n+1) + diphosphate. Catalytic component of the DNA-directed RNA polymerase (RNAP) that catalyzes the transcription in the cytoplasm of viral DNA into RNA using the four ribonucleoside triphosphates as substrates. Forms the polymerase active center together with RPB2. Part of the core element with the central large cleft, the clamp element that moves to open and close the cleft and the jaws that are thought to grab the incoming DNA template. The chain is DNA-directed RNA polymerase RPB1 homolog from African swine fever virus (isolate Warthog/Namibia/Wart80/1980) (ASFV).